Reading from the N-terminus, the 494-residue chain is MDREYGSYNQRSVNSYGNQSFSMDEMGDSNFSRFGPYESYDSRSSVGGRDLYRSGYGYNDHEQGHFGDSYDGRYENPYRNSVDSFEGRSQGGSSWDPSFTRSKVRTGFMEDRGRDSYSSYGSFSSPYMKPAAVGSRGRGMPAYPENAFGGRSNDAFGGPSKGRGRGRGQMPEYGVMRRHRVVVEYKHLGVAARGAARGVKRKMAPPFKPVGFFGKKQKLSKPGANQNKSVPPPAEKLSEEEEEKRRTEARREKQRRRREKNSEKYGDGTAFTCSFCKFRSFDEKGIEEHLTSATHQEMLDHIQKQTKFDKPVMEFLHECIVNKFKKTVARRVQSVANEAAKTLEKDVMEGVNPDDHMMKVETVHCSACSVYVPALHSSVQLHLKSADHSKSKLTYKEQIKRESILTATSILNNPLVKARYELYLKGENPFETQPDEQQQEQEEEEEEEEQQEQVAVSEQEPSEQETSDEQAAAIAAEPEGEDFTCDPLTTTDEV.

Disordered regions lie at residues 1–22, 147–170, and 202–264; these read MDRE…QSFS, AFGG…RGQM, and KMAP…NSEK. A compositionally biased stretch (polar residues) spans 7–22; it reads SYNQRSVNSYGNQSFS. Residues 200-221 carry the Bipartite nuclear localization signal motif; it reads KRKMAPPFKPVGFFGKKQKLSK. C2H2 AKAP95-type zinc fingers lie at residues 273–295 and 365–388; these read CSFC…SATH and CSAC…SADH. The interval 429–494 is disordered; that stretch reads PFETQPDEQQ…CDPLTTTDEV (66 aa). Residues 433–451 are compositionally biased toward acidic residues; that stretch reads QPDEQQQEQEEEEEEEEQQ.

This sequence belongs to the AKAP95 family. Component of the DBIRD complex.

It localises to the nucleus. Its function is as follows. Core component of the DBIRD complex, a multiprotein complex that acts at the interface between core mRNP particles and RNA polymerase II (RNAPII) and integrates transcript elongation with the regulation of alternative splicing. The chain is DBIRD complex subunit ZNF326 (znf326) from Xenopus laevis (African clawed frog).